The chain runs to 80 residues: Raniseptin-8 (80 aa).

An N-terminal signal peptide occupies residues 1–22 (MAFLKKSLFLVLFLGIVSLSIC). The propeptide occupies 23–49 (EEEKREGEEEEKQEEENEELSEEELRE). The disordered stretch occupies residues 27–46 (REGEEEEKQEEENEELSEEE). Residues 30-44 (EEEEKQEEENEELSE) show a composition bias toward acidic residues.

This sequence belongs to the frog skin active peptide (FSAP) family. Dermaseptin subfamily. Expressed by the skin glands.

It localises to the secreted. In terms of biological role, has antibacterial activity. This Boana raniceps (Chaco tree frog) protein is Raniseptin-8.